A 151-amino-acid chain; its full sequence is Ribosomal RNA large subunit methyltransferase H (151 aa).

S-adenosyl-L-methionine-binding positions include Ala101 and 119–124; that span reads LSEMTF.

This sequence belongs to the RNA methyltransferase RlmH family. In terms of assembly, homodimer.

Its subcellular location is the cytoplasm. The enzyme catalyses pseudouridine(1915) in 23S rRNA + S-adenosyl-L-methionine = N(3)-methylpseudouridine(1915) in 23S rRNA + S-adenosyl-L-homocysteine + H(+). Functionally, specifically methylates the pseudouridine at position 1915 (m3Psi1915) in 23S rRNA. This is Ribosomal RNA large subunit methyltransferase H from Helicobacter pylori (strain G27).